Here is a 22-residue protein sequence, read N- to C-terminus: Conantokin-Oc (22 aa).

Residues 1–22 are disordered; the sequence is GEEERKAMAELEAKKAQEALKA. Glu3, Glu4, Glu10, and Glu18 each carry 4-carboxyglutamate.

As to expression, expressed by the venom duct.

The protein resides in the secreted. Conantokins inhibit N-methyl-D-aspartate (NMDA) receptors. This is Conantokin-Oc from Conus ochroleucus (Perfect cone).